A 79-amino-acid polypeptide reads, in one-letter code: Neurotoxin BmK-M9 (79 aa).

The signal sequence occupies residues 1–14 (MISFALLLMTGVES). An LCN-type CS-alpha/beta domain is found at 16–78 (RDAYIAKPEN…VPIRVPGKCH (63 aa)). Disulfide bonds link Cys26–Cys77, Cys30–Cys50, Cys36–Cys60, and Cys40–Cys62. A propeptide (removed by a carboxypeptidase) is located at residue Arg79.

Belongs to the long (4 C-C) scorpion toxin superfamily. Sodium channel inhibitor family. Alpha subfamily. As to expression, expressed by the venom gland.

The protein resides in the secreted. Its function is as follows. Binds to sodium channels (Nav) and inhibits the inactivation of the activated channels, thereby blocking neuronal transmission. This toxin is active against mammals. The sequence is that of Neurotoxin BmK-M9 from Olivierus martensii (Manchurian scorpion).